The following is a 206-amino-acid chain: Large ribosomal subunit protein uL4 (206 aa).

The tract at residues G46–T77 is disordered. Residues H58 to G70 show a composition bias toward basic residues.

Belongs to the universal ribosomal protein uL4 family. As to quaternary structure, part of the 50S ribosomal subunit.

Functionally, one of the primary rRNA binding proteins, this protein initially binds near the 5'-end of the 23S rRNA. It is important during the early stages of 50S assembly. It makes multiple contacts with different domains of the 23S rRNA in the assembled 50S subunit and ribosome. In terms of biological role, forms part of the polypeptide exit tunnel. The protein is Large ribosomal subunit protein uL4 of Albidiferax ferrireducens (strain ATCC BAA-621 / DSM 15236 / T118) (Rhodoferax ferrireducens).